The following is a 325-amino-acid chain: VSG expression site-associated protein 117A (325 aa).

The N-terminal stretch at 1-23 is a signal peptide; it reads MKVTIVELVVWLFSVNFFVVVAE. Asparagine 72, asparagine 290, and asparagine 313 each carry an N-linked (GlcNAc...) asparagine glycan.

In terms of biological role, not known but may be related to activation of the variant surface glycoprotein genes. This chain is VSG expression site-associated protein 117A, found in Trypanosoma brucei brucei.